The sequence spans 660 residues: DNA ligase (660 aa).

NAD(+) is bound by residues 32 to 36 (DEVYD), 81 to 82 (SM), and Glu112. Lys114 serves as the catalytic N6-AMP-lysine intermediate. NAD(+) contacts are provided by Arg135, Glu169, Lys284, and Lys308. Residues Cys402, Cys405, Cys418, and Cys423 each contribute to the Zn(2+) site. A BRCT domain is found at 578–660 (VENSPLAHKT…ELLKEAGIEA (83 aa)).

It belongs to the NAD-dependent DNA ligase family. LigA subfamily. It depends on Mg(2+) as a cofactor. Mn(2+) serves as cofactor.

The catalysed reaction is NAD(+) + (deoxyribonucleotide)n-3'-hydroxyl + 5'-phospho-(deoxyribonucleotide)m = (deoxyribonucleotide)n+m + AMP + beta-nicotinamide D-nucleotide.. DNA ligase that catalyzes the formation of phosphodiester linkages between 5'-phosphoryl and 3'-hydroxyl groups in double-stranded DNA using NAD as a coenzyme and as the energy source for the reaction. It is essential for DNA replication and repair of damaged DNA. The sequence is that of DNA ligase from Nitratiruptor sp. (strain SB155-2).